The chain runs to 62 residues: UPF0434 protein FTL_1400 (62 aa).

The protein belongs to the UPF0434 family.

In Francisella tularensis subsp. holarctica (strain LVS), this protein is UPF0434 protein FTL_1400.